The chain runs to 550 residues: CTP synthase (550 aa).

The interval 1–271 (MTRYIFITGG…DAEVLDVFGM (271 aa)) is amidoligase domain. S13 serves as a coordination point for CTP. Residue S13 participates in UTP binding. Position 14–19 (14–19 (SLGKGL)) interacts with ATP. Y54 lines the L-glutamine pocket. D71 provides a ligand contact to ATP. Mg(2+)-binding residues include D71 and E145. CTP is bound by residues 152–154 (DIE), 192–197 (KTKPTQ), and K228. Residues 192–197 (KTKPTQ) and K228 each bind UTP. The region spanning 297-549 (TIAVVGKYTV…IAAAKEQGRL (253 aa)) is the Glutamine amidotransferase type-1 domain. Position 361 (G361) interacts with L-glutamine. The active-site Nucleophile; for glutamine hydrolysis is the C388. L-glutamine-binding positions include 389-392 (FGMQ), E412, and R477. Catalysis depends on residues H522 and E524.

The protein belongs to the CTP synthase family. In terms of assembly, homotetramer.

It catalyses the reaction UTP + L-glutamine + ATP + H2O = CTP + L-glutamate + ADP + phosphate + 2 H(+). The catalysed reaction is L-glutamine + H2O = L-glutamate + NH4(+). The enzyme catalyses UTP + NH4(+) + ATP = CTP + ADP + phosphate + 2 H(+). It functions in the pathway pyrimidine metabolism; CTP biosynthesis via de novo pathway; CTP from UDP: step 2/2. Allosterically activated by GTP, when glutamine is the substrate; GTP has no effect on the reaction when ammonia is the substrate. The allosteric effector GTP functions by stabilizing the protein conformation that binds the tetrahedral intermediate(s) formed during glutamine hydrolysis. Inhibited by the product CTP, via allosteric rather than competitive inhibition. Catalyzes the ATP-dependent amination of UTP to CTP with either L-glutamine or ammonia as the source of nitrogen. Regulates intracellular CTP levels through interactions with the four ribonucleotide triphosphates. This Caulobacter sp. (strain K31) protein is CTP synthase.